A 666-amino-acid polypeptide reads, in one-letter code: DNA mismatch repair protein MutL (666 aa).

It belongs to the DNA mismatch repair MutL/HexB family.

Its function is as follows. This protein is involved in the repair of mismatches in DNA. It is required for dam-dependent methyl-directed DNA mismatch repair. May act as a 'molecular matchmaker', a protein that promotes the formation of a stable complex between two or more DNA-binding proteins in an ATP-dependent manner without itself being part of a final effector complex. The protein is DNA mismatch repair protein MutL of Clostridium botulinum (strain Loch Maree / Type A3).